A 458-amino-acid chain; its full sequence is GTPase Der (458 aa).

2 consecutive EngA-type G domains span residues 9-171 and 197-368; these read KTIA…DLNQ and IQVG…ECFS. Residues 15-22, 62-66, 123-126, 203-210, 250-254, and 314-317 contribute to the GTP site; these read GQPNVGKS, DTGGM, NKID, GRVNVGKS, DTAGI, and NKWD. The KH-like domain maps to 369–453; it reads KRIPTSLLNS…PLILNAKDKK (85 aa).

Belongs to the TRAFAC class TrmE-Era-EngA-EngB-Septin-like GTPase superfamily. EngA (Der) GTPase family. As to quaternary structure, associates with the 50S ribosomal subunit.

Its function is as follows. GTPase that plays an essential role in the late steps of ribosome biogenesis. In Helicobacter pylori (strain ATCC 700392 / 26695) (Campylobacter pylori), this protein is GTPase Der.